We begin with the raw amino-acid sequence, 590 residues long: Protein OS-9 homolog (590 aa).

Positions 1–19 (MRRPSLALLALSSLPFGSA) are cleaved as a signal peptide. Residues 83-106 (SAIRESATANADTDNGDESIGGTS) form a disordered region. An N-linked (GlcNAc...) asparagine glycan is attached at asparagine 136. In terms of domain architecture, MRH spans 167 to 312 (NQCLHFVSGW…VIHTPRLCAD (146 aa)). Cysteine 169 and cysteine 182 are oxidised to a cystine. 3 residues coordinate a mannooligosaccharide derivative: tryptophan 176, tryptophan 177, and glutamine 189. The tract at residues 198–248 (GGPPLRDKNSQEYILGTSLPPSSHSQKGKQIEVPNNEQKQLSPPPNTELQA) is disordered. 2 disulfides stabilise this stretch: cysteine 265/cysteine 298 and cysteine 280/cysteine 310. A mannooligosaccharide derivative contacts are provided by aspartate 266, arginine 272, glutamate 294, and tyrosine 300. Disordered stretches follow at residues 357–376 (AAVT…PEKL), 436–472 (GDDN…MKKM), and 545–590 (YEDE…RDEL). Basic residues predominate over residues 446-455 (HHPKAGKGRK). 2 stretches are compositionally biased toward basic and acidic residues: residues 556 to 568 (EAGK…KKGG) and 579 to 590 (EGSKEEYYRDEL). The Prevents secretion from ER motif lies at 587 to 590 (RDEL).

Belongs to the OS-9 family. In terms of assembly, interacts with missfolded ER lumenal proteins.

It is found in the endoplasmic reticulum membrane. In terms of biological role, lectin involved in the quality control of the secretory pathway. As a member of the endoplasmic reticulum-associated degradation lumenal (ERAD-L) surveillance system, targets misfolded endoplasmic reticulum lumenal glycoproteins for degradation. The sequence is that of Protein OS-9 homolog (yos-9) from Neurospora crassa (strain ATCC 24698 / 74-OR23-1A / CBS 708.71 / DSM 1257 / FGSC 987).